Consider the following 296-residue polypeptide: ATP synthase peripheral stalk subunit OSCP, mitochondrial (296 aa).

This sequence belongs to the ATPase delta chain family. As to quaternary structure, component of the ATP synthase complex composed at least of ATP5F1A/subunit alpha, ATP5F1B/subunit beta, ATP5MC1/subunit c (homooctomer), MT-ATP6/subunit a, MT-ATP8/subunit 8, ATP5ME/subunit e, ATP5MF/subunit f, ATP5MG/subunit g, ATP5MK/subunit k, ATP5MJ/subunit j, ATP5F1C/subunit gamma, ATP5F1D/subunit delta, ATP5F1E/subunit epsilon, ATP5PF/subunit F6, ATP5PB/subunit b, ATP5PD/subunit d, ATP5PO/subunit OSCP. ATP synthase complex consists of a soluble F(1) head domain (subunits alpha(3) and beta(3)) - the catalytic core - and a membrane F(0) domain - the membrane proton channel (subunits c, a, 8, e, f, g, k and j). These two domains are linked by a central stalk (subunits gamma, delta, and epsilon) rotating inside the F1 region and a stationary peripheral stalk (subunits F6, b, d, and OSCP).

It is found in the mitochondrion. Its subcellular location is the mitochondrion inner membrane. Subunit OSCP, of the mitochondrial membrane ATP synthase complex (F(1)F(0) ATP synthase or Complex V) that produces ATP from ADP in the presence of a proton gradient across the membrane which is generated by electron transport complexes of the respiratory chain. ATP synthase complex consist of a soluble F(1) head domain - the catalytic core - and a membrane F(1) domain - the membrane proton channel. These two domains are linked by a central stalk rotating inside the F(1) region and a stationary peripheral stalk. During catalysis, ATP synthesis in the catalytic domain of F(1) is coupled via a rotary mechanism of the central stalk subunits to proton translocation. In vivo, can only synthesize ATP although its ATP hydrolase activity can be activated artificially in vitro. Part of the complex F(0) domain. Part of the complex F(0) domain and the peripheric stalk, which acts as a stator to hold the catalytic alpha(3)beta(3) subcomplex and subunit a/ATP6 static relative to the rotary elements. This is ATP synthase peripheral stalk subunit OSCP, mitochondrial from Dictyostelium discoideum (Social amoeba).